We begin with the raw amino-acid sequence, 921 residues long: Valine--tRNA ligase (921 aa).

Residues 40–50 (PNVTGSLHMGH) carry the 'HIGH' region motif. The 'KMSKS' region motif lies at 522-526 (KMSKS). Lys-525 provides a ligand contact to ATP. A coiled-coil region spans residues 849–921 (MADLIDKEAE…LQHKNRIESL (73 aa)).

It belongs to the class-I aminoacyl-tRNA synthetase family. ValS type 1 subfamily. In terms of assembly, monomer.

Its subcellular location is the cytoplasm. It catalyses the reaction tRNA(Val) + L-valine + ATP = L-valyl-tRNA(Val) + AMP + diphosphate. Its function is as follows. Catalyzes the attachment of valine to tRNA(Val). As ValRS can inadvertently accommodate and process structurally similar amino acids such as threonine, to avoid such errors, it has a 'posttransfer' editing activity that hydrolyzes mischarged Thr-tRNA(Val) in a tRNA-dependent manner. The chain is Valine--tRNA ligase from Legionella pneumophila (strain Paris).